Consider the following 374-residue polypeptide: Glutamine synthetase (374 aa).

The required for glutamine-induced ubiquitination by CRL4(CRBN) and proteasomal degradation stretch occupies residues 2-25; that stretch reads TTSASSHLNKGIKQVYMSLPQGEK. N6-acetyllysine is present on residues Lys11 and Lys14. Residues 24–106 enclose the GS beta-grasp domain; the sequence is EKVQAMYIWI…VLCESFQVQF (83 aa). The 261-residue stretch at 114–374 folds into the GS catalytic domain; it reads LRHTCKRIMD…TGDEPFQYKN (261 aa). An ATP-binding site is contributed by Glu135. Mn(2+) contacts are provided by Glu135, Glu137, Glu197, and Glu204. 204–209 provides a ligand contact to ATP; the sequence is EFQIGP. 247–248 lines the L-glutamate pocket; that stretch reads NW. His254 lines the Mn(2+) pocket. ATP-binding positions include 256–258, Arg320, and Arg325; that span reads NFS. Arg320 contributes to the L-glutamate binding site. 337–339 is a binding site for ADP; the sequence is YFE. Mn(2+) is bound at residue Glu339. Arg341 is an L-glutamate binding site. The residue at position 344 (Ser344) is a Phosphoserine.

Belongs to the glutamine synthetase family. In terms of assembly, decamer; composed of two pentamers. Interacts with PALMD. Interacts with RHOJ. Interacts with BEST2; this interaction tethers a fraction of GLUL to the membrane, causing a decrease of cytosolic glutamine synthase (GS) activity and inhibits the chloride channel activity of BEST2 by affecting the gating at the aperture in the absence of intracellular glutamate. The cofactor is Mg(2+). Mn(2+) is required as a cofactor. In terms of processing, palmitoylated; undergoes autopalmitoylation. Acetylated by EP300/p300; acetylation is stimulated by increased glutamine levels and promotes ubiquitin-mediated proteasomal degradation. Post-translationally, ubiquitinated by ZNRF1. Ubiquitinated by the DCX (DDB1-CUL4-X-box) E3 ubiquitin-protein ligase complex called CRL4(CRBN), leading to proteasomal degradation.

The protein localises to the cytoplasm. It is found in the cytosol. The protein resides in the microsome. Its subcellular location is the mitochondrion. It localises to the cell membrane. It carries out the reaction L-glutamate + NH4(+) + ATP = L-glutamine + ADP + phosphate + H(+). The catalysed reaction is L-cysteinyl-[protein] + hexadecanoyl-CoA = S-hexadecanoyl-L-cysteinyl-[protein] + CoA. Its activity is regulated as follows. Glutamine synthetase activity is inhibited by methionine sulfoximine (MSO). Functionally, glutamine synthetase that catalyzes the ATP-dependent conversion of glutamate and ammonia to glutamine. Its role depends on tissue localization: in the brain, it regulates the levels of toxic ammonia and converts neurotoxic glutamate to harmless glutamine, whereas in the liver, it is one of the enzymes responsible for the removal of ammonia. Plays a key role in ammonium detoxification during erythropoiesis: the glutamine synthetase activity is required to remove ammonium generated by porphobilinogen deaminase (HMBS) during heme biosynthesis to prevent ammonium accumulation and oxidative stress. Essential for proliferation of fetal skin fibroblasts. Independently of its glutamine synthetase activity, required for endothelial cell migration during vascular development. Involved in angiogenesis by regulating membrane localization and activation of the GTPase RHOJ, possibly by promoting RHOJ palmitoylation. May act as a palmitoyltransferase for RHOJ: able to autopalmitoylate and then transfer the palmitoyl group to RHOJ. Plays a role in ribosomal 40S subunit biogenesis. Through the interaction with BEST2, inhibits BEST2 channel activity by affecting the gating at the aperture in the absence of intracellular L-glutamate, but sensitizes BEST2 to intracellular L-glutamate, which promotes the opening of BEST2 and thus relieves its inhibitory effect on BEST2. The chain is Glutamine synthetase from Macaca fascicularis (Crab-eating macaque).